The following is a 158-amino-acid chain: Transcription elongation factor GreB (158 aa).

The protein belongs to the GreA/GreB family. GreB subfamily.

In terms of biological role, necessary for efficient RNA polymerase transcription elongation past template-encoded arresting sites. The arresting sites in DNA have the property of trapping a certain fraction of elongating RNA polymerases that pass through, resulting in locked ternary complexes. Cleavage of the nascent transcript by cleavage factors such as GreA or GreB allows the resumption of elongation from the new 3'terminus. GreB releases sequences of up to 9 nucleotides in length. This chain is Transcription elongation factor GreB, found in Escherichia coli O157:H7.